We begin with the raw amino-acid sequence, 275 residues long: Large ribosomal subunit protein uL2c (275 aa).

Disordered regions lie at residues 1–28 and 227–251; these read MGIR…TKSK and PCDH…TPWG. The span at 10–22 shows a compositional bias: polar residues; it reads TPGTRNRSSSDFS.

The protein belongs to the universal ribosomal protein uL2 family. As to quaternary structure, part of the 50S ribosomal subunit.

Its subcellular location is the plastid. The protein localises to the chloroplast. The protein is Large ribosomal subunit protein uL2c (rpl2) of Rhodomonas salina (Cryptomonas salina).